Here is a 429-residue protein sequence, read N- to C-terminus: Serine hydroxymethyltransferase (429 aa).

Residues leucine 126 and 130–132 (GHL) each bind (6S)-5,6,7,8-tetrahydrofolate. Lysine 235 carries the N6-(pyridoxal phosphate)lysine modification. 359–361 (SPF) contacts (6S)-5,6,7,8-tetrahydrofolate.

Belongs to the SHMT family. In terms of assembly, homodimer. The cofactor is pyridoxal 5'-phosphate.

The protein localises to the cytoplasm. The enzyme catalyses (6R)-5,10-methylene-5,6,7,8-tetrahydrofolate + glycine + H2O = (6S)-5,6,7,8-tetrahydrofolate + L-serine. It functions in the pathway one-carbon metabolism; tetrahydrofolate interconversion. It participates in amino-acid biosynthesis; glycine biosynthesis; glycine from L-serine: step 1/1. Catalyzes the reversible interconversion of serine and glycine with tetrahydrofolate (THF) serving as the one-carbon carrier. This reaction serves as the major source of one-carbon groups required for the biosynthesis of purines, thymidylate, methionine, and other important biomolecules. Also exhibits THF-independent aldolase activity toward beta-hydroxyamino acids, producing glycine and aldehydes, via a retro-aldol mechanism. The chain is Serine hydroxymethyltransferase from Prochlorococcus marinus (strain MIT 9313).